We begin with the raw amino-acid sequence, 562 residues long: Oxygen-dependent choline dehydrogenase (562 aa).

Residue 4–33 coordinates FAD; it reads DYIIIGAGSAGNVLATRLTEDPNTTVLLLE. The Proton acceptor role is filled by His473.

This sequence belongs to the GMC oxidoreductase family. It depends on FAD as a cofactor.

It carries out the reaction choline + A = betaine aldehyde + AH2. The enzyme catalyses betaine aldehyde + NAD(+) + H2O = glycine betaine + NADH + 2 H(+). It functions in the pathway amine and polyamine biosynthesis; betaine biosynthesis via choline pathway; betaine aldehyde from choline (cytochrome c reductase route): step 1/1. Functionally, involved in the biosynthesis of the osmoprotectant glycine betaine. Catalyzes the oxidation of choline to betaine aldehyde and betaine aldehyde to glycine betaine at the same rate. The chain is Oxygen-dependent choline dehydrogenase from Escherichia coli O45:K1 (strain S88 / ExPEC).